We begin with the raw amino-acid sequence, 670 residues long: uncharacterized protein (670 aa).

10 helical membrane-spanning segments follow: residues 23-42 (YALR…YYLN), 47-69 (YWAM…SKSL), 76-98 (LLGA…FFLL), 118-140 (VAYA…VNIT), 153-170 (VCEV…MMIL), 381-403 (QWDA…SAVA), 410-432 (SLLM…GLMV), 437-454 (LWQF…MQLL), 461-483 (FAAL…NPPV), and 493-510 (NLAK…FAIL).

The protein belongs to the aromatic acid exporter ArAE (TC 2.A.85) family.

It localises to the cell membrane. This is an uncharacterized protein from Escherichia coli O157:H7.